Here is a 269-residue protein sequence, read N- to C-terminus: Tryptophan synthase alpha chain (269 aa).

Active-site proton acceptor residues include Glu-41 and Asp-52.

The protein belongs to the TrpA family. As to quaternary structure, tetramer of two alpha and two beta chains.

The catalysed reaction is (1S,2R)-1-C-(indol-3-yl)glycerol 3-phosphate + L-serine = D-glyceraldehyde 3-phosphate + L-tryptophan + H2O. Its pathway is amino-acid biosynthesis; L-tryptophan biosynthesis; L-tryptophan from chorismate: step 5/5. Its function is as follows. The alpha subunit is responsible for the aldol cleavage of indoleglycerol phosphate to indole and glyceraldehyde 3-phosphate. The chain is Tryptophan synthase alpha chain from Geobacillus stearothermophilus (Bacillus stearothermophilus).